We begin with the raw amino-acid sequence, 244 residues long: 5-oxoprolinase subunit A (244 aa).

The protein belongs to the LamB/PxpA family. As to quaternary structure, forms a complex composed of PxpA, PxpB and PxpC.

The catalysed reaction is 5-oxo-L-proline + ATP + 2 H2O = L-glutamate + ADP + phosphate + H(+). Its function is as follows. Catalyzes the cleavage of 5-oxoproline to form L-glutamate coupled to the hydrolysis of ATP to ADP and inorganic phosphate. This is 5-oxoprolinase subunit A from Escherichia coli O157:H7.